Consider the following 406-residue polypeptide: Calsequestrin-1 (406 aa).

Positions 1–34 (MRATDRMGARAVSKLRLALLFVLVLGTPRSGVQG) are cleaved as a signal peptide. Tyrosine 43 carries the post-translational modification Phosphotyrosine. Position 81 is a phosphoserine (serine 81). Position 124 is a phosphothreonine (threonine 124). Serine 216 carries the phosphoserine modification. Asparagine 350 carries N-linked (GlcNAc...) asparagine glycosylation. The segment at 382-406 (EGEINTEDDDDDDDDDDDDDDDDDD) is disordered.

The protein belongs to the calsequestrin family. As to quaternary structure, monomer; increases in response to a depletion of intracellular calcium. Homodimer. Homotetramer and homopolymer. Can form linear homooligomers. Ca(2+) ions promote oligomerization. Interacts (via C-terminal end and preferentially with the monomeric form) with STIM1; this interaction increases in response to a depletion of intracellular calcium, decreases both STIM1 aggregation and clustering, interaction of STIM1 with ORAI1 and store-operated Ca(2+) entry (SOCE) activity. Interacts with ASPH and TRDN. In terms of processing, N-glycosylated. In terms of tissue distribution, detected in skeletal muscle and in smooth muscle from vas deferens, aorta and stomach (at protein level).

Its subcellular location is the endoplasmic reticulum. It is found in the sarcoplasmic reticulum. The protein resides in the sarcoplasmic reticulum lumen. The protein localises to the sarcoplasmic reticulum membrane. It localises to the mitochondrion matrix. Its function is as follows. Calsequestrin is a high-capacity, moderate affinity, calcium-binding protein and thus acts as an internal calcium store in muscle. Calcium ions are bound by clusters of acidic residues at the protein surface, often at the interface between subunits. Can bind around 80 Ca(2+) ions. Regulates the release of lumenal Ca(2+) via the calcium release channel RYR1; this plays an important role in triggering muscle contraction. Negatively regulates store-operated Ca(2+) entry (SOCE) activity. The sequence is that of Calsequestrin-1 (Casq1) from Rattus norvegicus (Rat).